The sequence spans 349 residues: ATPase GET3 (349 aa).

26–33 (KGGVGKTT) is an ATP binding site. Residue D57 is part of the active site. E240 and N267 together coordinate ATP. Zn(2+)-binding residues include C280 and C283.

The protein belongs to the arsA ATPase family. In terms of assembly, homodimer. Component of the Golgi to ER traffic (GET) complex, which is composed of GET1, GET2 and GET3. Within the complex, GET1 and GET2 form a heterotetramer which is stabilized by phosphatidylinositol binding and which binds to the GET3 homodimer. Interacts with the chloride channel protein GEF1.

It localises to the cytoplasm. The protein resides in the endoplasmic reticulum. Its subcellular location is the golgi apparatus. In terms of biological role, ATPase required for the post-translational delivery of tail-anchored (TA) proteins to the endoplasmic reticulum. Recognizes and selectively binds the transmembrane domain of TA proteins in the cytosol. This complex then targets to the endoplasmic reticulum by membrane-bound receptors GET1 and GET2, where the tail-anchored protein is released for insertion. This process is regulated by ATP binding and hydrolysis. ATP binding drives the homodimer towards the closed dimer state, facilitating recognition of newly synthesized TA membrane proteins. ATP hydrolysis is required for insertion. Subsequently, the homodimer reverts towards the open dimer state, lowering its affinity for the GET1-GET2 receptor, and returning it to the cytosol to initiate a new round of targeting. Cooperates with the HDEL receptor ERD2 to mediate the ATP-dependent retrieval of resident ER proteins that contain a C-terminal H-D-E-L retention signal from the Golgi to the ER. Involved in low-level resistance to the oxyanions arsenite and arsenate, and in heat tolerance. The chain is ATPase GET3 from Lachancea thermotolerans (strain ATCC 56472 / CBS 6340 / NRRL Y-8284) (Yeast).